The primary structure comprises 688 residues: Probable xyloglucan glycosyltransferase 7 (688 aa).

The disordered stretch occupies residues 1–25 (MAPSWWGRSGGGGVGNGGGTPVVVK). Over residues 8-20 (RSGGGGVGNGGGT) the composition is skewed to gly residues. Helical transmembrane passes span 121-141 (VSLVLSLLLLAVEVAAYLQGW) and 183-203 (VALFMVQSIDRLVLCLGCFWI). The active site involves aspartate 269. Positions 328 and 330 each coordinate substrate. Aspartate 422 is an active-site residue. Transmembrane regions (helical) follow at residues 500–520 (LILPFYSFTLFCVILPMTMFV) and 525–545 (LPAWVVCYIPATMSILNILPA). A disordered region spans residues 604 to 635 (HSKQQRVGSAPNLDALTKEESNPKKDSKKKKH). Positions 619–628 (LTKEESNPKK) are enriched in basic and acidic residues. Transmembrane regions (helical) follow at residues 638–657 (IYRKELALSFLLLTAAARSL) and 663–683 (IHFYFLLFQGVSFLVVGLDLI).

This sequence belongs to the glycosyltransferase 2 family. Plant cellulose synthase-like C subfamily.

It localises to the golgi apparatus membrane. Probable beta-1,4-glucan synthase rather involved in the synthesis of the xyloglucan backbone than cellulose. Seems to work simultaneously with xyloglucan 6-xylosyltransferase. Xyloglucan is a noncellulosic polysaccharides of plant cell wall and consists of a glucan backbone substituted by xylose, galactose and fucose. In Oryza sativa subsp. japonica (Rice), this protein is Probable xyloglucan glycosyltransferase 7 (CSLC7).